Reading from the N-terminus, the 142-residue chain is ATP synthase epsilon chain (142 aa).

The protein belongs to the ATPase epsilon chain family. As to quaternary structure, F-type ATPases have 2 components, CF(1) - the catalytic core - and CF(0) - the membrane proton channel. CF(1) has five subunits: alpha(3), beta(3), gamma(1), delta(1), epsilon(1). CF(0) has three main subunits: a, b and c.

It localises to the cell inner membrane. Produces ATP from ADP in the presence of a proton gradient across the membrane. In Pasteurella multocida (strain Pm70), this protein is ATP synthase epsilon chain.